The chain runs to 420 residues: Sodium-dependent phosphate transport protein 4 (420 aa).

A disordered region spans residues 1–21 (MATKTELSPTARESKNAQDMQ). N-linked (GlcNAc...) asparagine glycosylation is found at Asn49, Asn60, Asn68, and Asn77. The next 8 helical transmembrane spans lie at 126 to 146 (SIAL…GGFI), 154 to 174 (FVFY…FVVI), 218 to 238 (IWSI…MVVY), 256 to 276 (LLSA…GYLA), 292 to 314 (IATI…LNSG), 319 to 341 (TALL…INVL), 357 to 377 (GFSS…LSQD), and 385 to 405 (VFFL…IFGE).

This sequence belongs to the major facilitator superfamily. Sodium/anion cotransporter family. Expressed in the liver and kidney. It is detected in proximal tubules in renal cortex as well as some tubules and glomeruli, with highest expression at the apical side of proximal tubules (at protein level).

It localises to the endoplasmic reticulum membrane. The protein localises to the cell membrane. The enzyme catalyses urate(in) + Na(+)(out) = urate(out) + Na(+)(in). Its function is as follows. Transports organic anions in a voltage-driven, multispecific, manner, on the apical side of renal proximal tubule. In particular, participates in the secretion of urate from the cell into the lumen. Urate is the end product of purine metabolism. May have roles in the metabolism and secretion of estrone sulfate, estradiol-17-beta-glucuronide, ochratoxin A, as wells as drugs such as bumetanide. The chain is Sodium-dependent phosphate transport protein 4 (SLC17A3) from Homo sapiens (Human).